The chain runs to 332 residues: Fructose-bisphosphate aldolase (332 aa).

Residue S56 coordinates D-glyceraldehyde 3-phosphate. D93 functions as the Proton donor in the catalytic mechanism. Zn(2+) is bound by residues H94, D115, E147, and H191. G192 provides a ligand contact to dihydroxyacetone phosphate. H234 provides a ligand contact to Zn(2+). Dihydroxyacetone phosphate contacts are provided by residues 235-237 (GAS) and 277-280 (NIDS).

This sequence belongs to the class II fructose-bisphosphate aldolase family. Homodimer. Requires Zn(2+) as cofactor.

It catalyses the reaction beta-D-fructose 1,6-bisphosphate = D-glyceraldehyde 3-phosphate + dihydroxyacetone phosphate. The protein operates within carbohydrate degradation; glycolysis; D-glyceraldehyde 3-phosphate and glycerone phosphate from D-glucose: step 4/4. Functionally, catalyzes the aldol condensation of dihydroxyacetone phosphate (DHAP or glycerone-phosphate) with glyceraldehyde 3-phosphate (G3P) to form fructose 1,6-bisphosphate (FBP) in gluconeogenesis and the reverse reaction in glycolysis. This is Fructose-bisphosphate aldolase (fba) from Treponema pallidum (strain Nichols).